The following is a 648-amino-acid chain: Transketolase (648 aa).

Residue histidine 22 participates in substrate binding. Thiamine diphosphate is bound by residues histidine 62 and 109 to 111; that span reads GPL. Residue aspartate 150 participates in Mg(2+) binding. Thiamine diphosphate is bound by residues glycine 151 and asparagine 180. Mg(2+)-binding residues include asparagine 180 and valine 182. Residues histidine 252, arginine 345, and serine 372 each coordinate substrate. Residue histidine 252 coordinates thiamine diphosphate. The active-site Proton donor is the glutamate 397. Phenylalanine 423 is a binding site for thiamine diphosphate. 3 residues coordinate substrate: histidine 447, aspartate 455, and arginine 506.

Belongs to the transketolase family. Homodimer. Mg(2+) serves as cofactor. It depends on Ca(2+) as a cofactor. Requires Mn(2+) as cofactor. The cofactor is Co(2+). Thiamine diphosphate is required as a cofactor.

The catalysed reaction is D-sedoheptulose 7-phosphate + D-glyceraldehyde 3-phosphate = aldehydo-D-ribose 5-phosphate + D-xylulose 5-phosphate. Functionally, catalyzes the transfer of a two-carbon ketol group from a ketose donor to an aldose acceptor, via a covalent intermediate with the cofactor thiamine pyrophosphate. The chain is Transketolase (tkt) from Mycoplasma pneumoniae (strain ATCC 29342 / M129 / Subtype 1) (Mycoplasmoides pneumoniae).